The following is a 347-amino-acid chain: Protein RecA (347 aa).

65–72 (GPESSGKT) is an ATP binding site. Positions 325–347 (KLGISDGDVEETEDAPKSLFDEE) are disordered. Residues 338–347 (DAPKSLFDEE) show a composition bias toward basic and acidic residues.

It belongs to the RecA family.

It localises to the cytoplasm. Functionally, can catalyze the hydrolysis of ATP in the presence of single-stranded DNA, the ATP-dependent uptake of single-stranded DNA by duplex DNA, and the ATP-dependent hybridization of homologous single-stranded DNAs. It interacts with LexA causing its activation and leading to its autocatalytic cleavage. This is Protein RecA from Staphylococcus aureus (strain Mu3 / ATCC 700698).